We begin with the raw amino-acid sequence, 275 residues long: Phenylalanine-4-hydroxylase (275 aa).

Fe cation-binding residues include His-135, His-140, and Glu-181.

Belongs to the biopterin-dependent aromatic amino acid hydroxylase family. The cofactor is Fe(2+).

It catalyses the reaction (6R)-L-erythro-5,6,7,8-tetrahydrobiopterin + L-phenylalanine + O2 = (4aS,6R)-4a-hydroxy-L-erythro-5,6,7,8-tetrahydrobiopterin + L-tyrosine. It functions in the pathway amino-acid degradation; L-phenylalanine degradation; acetoacetate and fumarate from L-phenylalanine: step 1/6. This chain is Phenylalanine-4-hydroxylase (phhA), found in Mesorhizobium japonicum (strain LMG 29417 / CECT 9101 / MAFF 303099) (Mesorhizobium loti (strain MAFF 303099)).